The sequence spans 419 residues: Cyclin-B2-2 (419 aa).

A disordered region spans residues 79–116 (QPSSAPLAPIGSERQKRTADSAFHGPADMECTKITSDD).

This sequence belongs to the cyclin family. Cyclin AB subfamily. As to quaternary structure, interacts with CDKB2-1. In terms of tissue distribution, expressed in the intercalary meristem and the elongation zone of internodes. Expressed in adventitious roots at all nodes under submergence conditions.

Its subcellular location is the nucleus. Its function is as follows. Involved in the control of the cell cycle at the G2/M (mitosis) transition. May associate to CDKB2-1 and activate CDKB2-1 kinase to promote cell division. In Oryza sativa subsp. indica (Rice), this protein is Cyclin-B2-2 (CYCB2-2).